Consider the following 382-residue polypeptide: Mannitol-1-phosphate 5-dehydrogenase (382 aa).

3 to 14 (ALHFGAGNIGRG) contacts NAD(+). Position 269 is an N6-acetyllysine (Lys-269).

Belongs to the mannitol dehydrogenase family.

It catalyses the reaction D-mannitol 1-phosphate + NAD(+) = beta-D-fructose 6-phosphate + NADH + H(+). This Escherichia coli O45:K1 (strain S88 / ExPEC) protein is Mannitol-1-phosphate 5-dehydrogenase.